A 420-amino-acid polypeptide reads, in one-letter code: Mannose-1-phosphate guanylyltransferase regulatory subunit alpha (420 aa).

The substrate-binding domain stretch occupies residues 2–251 (LKAVILIGGP…DGIWSQIKSA (250 aa)). The GDP-alpha-D-mannose site is built by Glu-85 and Gln-247. The interval 273–420 (LARHTAGGPR…SRSFTNQIIL (148 aa)) is hexapeptide repeat domain. Residues 356-384 (TPNDPNPNDPRARMDSESLFKDGKLLPAI) are C-loop.

It belongs to the transferase hexapeptide repeat family. As to quaternary structure, component of the GMPPA-GMPPB mannose-1-phosphate guanylyltransferase complex composed of 4 GMPPA subunits and 8 GMPPB subunits; the complex is organized into three layers, a central layer made up of 2 GMPPA dimers sandwiched between two layers each made up of 2 GMPPB dimers.

It is found in the cytoplasm. In terms of biological role, regulatory subunit of the GMPPA-GMPPB mannose-1-phosphate guanylyltransferase complex; reduces the catalytic activity of GMPPB when part of the complex. Mediates allosteric feedback inhibition of GMPPB catalytic activity upon binding GDP-alpha-D-mannose. Together with GMPPB regulates GDP-alpha-D-mannose levels. The protein is Mannose-1-phosphate guanylyltransferase regulatory subunit alpha (Gmppa) of Rattus norvegicus (Rat).